Here is a 351-residue protein sequence, read N- to C-terminus: L-threonine 3-dehydrogenase (351 aa).

Cys39 provides a ligand contact to Zn(2+). Residues Thr41 and His44 each act as charge relay system in the active site. The Zn(2+) site is built by His64, Glu65, Cys94, Cys97, Cys100, and Cys108. NAD(+) is bound by residues Ile176, Asp196, Arg201, 271–273 (LGI), and 295–296 (IY).

This sequence belongs to the zinc-containing alcohol dehydrogenase family. Homotetramer. Zn(2+) is required as a cofactor.

The protein localises to the cytoplasm. It carries out the reaction L-threonine + NAD(+) = (2S)-2-amino-3-oxobutanoate + NADH + H(+). The protein operates within amino-acid degradation; L-threonine degradation via oxydo-reductase pathway; glycine from L-threonine: step 1/2. Its function is as follows. Catalyzes the NAD(+)-dependent oxidation of L-threonine to 2-amino-3-ketobutyrate. This is L-threonine 3-dehydrogenase from Francisella philomiragia subsp. philomiragia (strain ATCC 25017 / CCUG 19701 / FSC 153 / O#319-036).